A 622-amino-acid polypeptide reads, in one-letter code: Low affinity potassium transport system protein Kup (622 aa).

The next 12 helical transmembrane spans lie at 12 to 32 (ITLA…LYTL), 49 to 69 (VFGF…IKYL), 103 to 123 (VIMG…TPAI), 137 to 157 (PQLD…LFMI), 165 to 185 (VGKL…VLGL), 213 to 233 (VSFI…ALYA), 247 to 267 (WFTV…ALLL), 276 to 296 (PFFL…AALA), 337 to 357 (IYIP…IVSF), 363 to 383 (LAAA…ILST), 396 to 416 (FVAL…SANL), and 419 to 439 (LLSG…IMTT).

The protein belongs to the HAK/KUP transporter (TC 2.A.72) family.

It localises to the cell inner membrane. It carries out the reaction K(+)(in) + H(+)(in) = K(+)(out) + H(+)(out). Its function is as follows. Responsible for the low-affinity transport of potassium into the cell. Likely operates as a K(+):H(+) symporter. The polypeptide is Low affinity potassium transport system protein Kup (Salmonella gallinarum (strain 287/91 / NCTC 13346)).